The following is a 92-amino-acid chain: DNA-directed RNA polymerase subunit omega (92 aa).

Belongs to the RNA polymerase subunit omega family. As to quaternary structure, the RNAP catalytic core consists of 2 alpha, 1 beta, 1 beta' and 1 omega subunit. When a sigma factor is associated with the core the holoenzyme is formed, which can initiate transcription.

The enzyme catalyses RNA(n) + a ribonucleoside 5'-triphosphate = RNA(n+1) + diphosphate. Promotes RNA polymerase assembly. Latches the N- and C-terminal regions of the beta' subunit thereby facilitating its interaction with the beta and alpha subunits. The protein is DNA-directed RNA polymerase subunit omega of Shewanella denitrificans (strain OS217 / ATCC BAA-1090 / DSM 15013).